A 158-amino-acid chain; its full sequence is 2-C-methyl-D-erythritol 2,4-cyclodiphosphate synthase (158 aa).

Residues Asp-8 and His-10 each contribute to the a divalent metal cation site. 4-CDP-2-C-methyl-D-erythritol 2-phosphate-binding positions include 8-10 and 34-35; these read DVH and HS. His-42 lines the a divalent metal cation pocket. 4-CDP-2-C-methyl-D-erythritol 2-phosphate-binding positions include 56-58, 61-65, 100-106, 132-135, Phe-139, and Lys-142; these read DIG, FPDTD, AQKPKML, and TTEE.

This sequence belongs to the IspF family. In terms of assembly, homotrimer. A divalent metal cation serves as cofactor.

It catalyses the reaction 4-CDP-2-C-methyl-D-erythritol 2-phosphate = 2-C-methyl-D-erythritol 2,4-cyclic diphosphate + CMP. It participates in isoprenoid biosynthesis; isopentenyl diphosphate biosynthesis via DXP pathway; isopentenyl diphosphate from 1-deoxy-D-xylulose 5-phosphate: step 4/6. Functionally, involved in the biosynthesis of isopentenyl diphosphate (IPP) and dimethylallyl diphosphate (DMAPP), two major building blocks of isoprenoid compounds. Catalyzes the conversion of 4-diphosphocytidyl-2-C-methyl-D-erythritol 2-phosphate (CDP-ME2P) to 2-C-methyl-D-erythritol 2,4-cyclodiphosphate (ME-CPP) with a corresponding release of cytidine 5-monophosphate (CMP). The protein is 2-C-methyl-D-erythritol 2,4-cyclodiphosphate synthase of Clostridium tetani (strain Massachusetts / E88).